Here is a 393-residue protein sequence, read N- to C-terminus: S-adenosylmethionine synthase 4 (393 aa).

Residue Glu9 coordinates Mg(2+). His15 serves as a coordination point for ATP. Glu43 is a binding site for K(+). Residues Glu56 and Gln99 each coordinate L-methionine. ATP-binding positions include 167–169, 235–238, Asp246, 252–253, Ala269, Lys273, and Lys277; these read DGK, SGRF, and RK. Asp246 provides a ligand contact to L-methionine. Lys277 contacts L-methionine.

It belongs to the AdoMet synthase family. As to quaternary structure, homotetramer. The cofactor is Mn(2+). Requires Mg(2+) as cofactor. Co(2+) is required as a cofactor. K(+) serves as cofactor.

Its subcellular location is the cytoplasm. The enzyme catalyses L-methionine + ATP + H2O = S-adenosyl-L-methionine + phosphate + diphosphate. It functions in the pathway amino-acid biosynthesis; S-adenosyl-L-methionine biosynthesis; S-adenosyl-L-methionine from L-methionine: step 1/1. Its function is as follows. Catalyzes the formation of S-adenosylmethionine from methionine and ATP. The reaction comprises two steps that are both catalyzed by the same enzyme: formation of S-adenosylmethionine (AdoMet) and triphosphate, and subsequent hydrolysis of the triphosphate. This chain is S-adenosylmethionine synthase 4 (METK4), found in Vitis vinifera (Grape).